The following is a 66-amino-acid chain: Large ribosomal subunit protein bL33c (66 aa).

Belongs to the bacterial ribosomal protein bL33 family.

It localises to the plastid. It is found in the chloroplast. In Helianthus annuus (Common sunflower), this protein is Large ribosomal subunit protein bL33c.